A 258-amino-acid chain; its full sequence is Cobalt-precorrin-4 C(11)-methyltransferase (258 aa).

Belongs to the precorrin methyltransferase family. Homodimer.

The enzyme catalyses Co-precorrin-4 + S-adenosyl-L-methionine = Co-precorrin-5A + S-adenosyl-L-homocysteine + H(+). Its pathway is cofactor biosynthesis; adenosylcobalamin biosynthesis; cob(II)yrinate a,c-diamide from sirohydrochlorin (anaerobic route): step 4/10. Catalyzes the methylation of C-11 in cobalt-precorrin-4 to form cobalt-precorrin-5A. This is Cobalt-precorrin-4 C(11)-methyltransferase (cbiF) from Priestia megaterium (Bacillus megaterium).